The sequence spans 119 residues: Large ribosomal subunit protein bL20 (119 aa).

Belongs to the bacterial ribosomal protein bL20 family.

Its function is as follows. Binds directly to 23S ribosomal RNA and is necessary for the in vitro assembly process of the 50S ribosomal subunit. It is not involved in the protein synthesizing functions of that subunit. This chain is Large ribosomal subunit protein bL20, found in Herminiimonas arsenicoxydans.